The chain runs to 132 residues: D-ribose pyranase (132 aa).

Catalysis depends on His-20, which acts as the Proton donor. Substrate contacts are provided by residues Asp-28, His-99, and 121–123 (YSN).

It belongs to the RbsD / FucU family. RbsD subfamily. As to quaternary structure, homodecamer.

Its subcellular location is the cytoplasm. The enzyme catalyses beta-D-ribopyranose = beta-D-ribofuranose. It functions in the pathway carbohydrate metabolism; D-ribose degradation; D-ribose 5-phosphate from beta-D-ribopyranose: step 1/2. Functionally, catalyzes the interconversion of beta-pyran and beta-furan forms of D-ribose. The sequence is that of D-ribose pyranase from Streptococcus agalactiae serotype III (strain NEM316).